The chain runs to 388 residues: GTPase Obg (388 aa).

In terms of domain architecture, Obg spans 4 to 162 (SNFVDYVKIY…MTVIMELKLL (159 aa)). The region spanning 163 to 329 (ADVGLVGFPN…LKDILWEELN (167 aa)) is the OBG-type G domain. GTP contacts are provided by residues 169–176 (GFPNAGKS), 194–198 (FTTLE), 216–219 (DIPG), 283–286 (TKSD), and 310–312 (SSV). Residues serine 176 and threonine 196 each contribute to the Mg(2+) site. The interval 352-388 (LKDMGEDEELDYEYEEDADDEDDDLDYEYEEEDWEEK) is disordered. Over residues 356-388 (GEDEELDYEYEEDADDEDDDLDYEYEEEDWEEK) the composition is skewed to acidic residues.

This sequence belongs to the TRAFAC class OBG-HflX-like GTPase superfamily. OBG GTPase family. In terms of assembly, monomer. It depends on Mg(2+) as a cofactor.

The protein resides in the cytoplasm. Its function is as follows. An essential GTPase which binds GTP, GDP and possibly (p)ppGpp with moderate affinity, with high nucleotide exchange rates and a fairly low GTP hydrolysis rate. Plays a role in control of the cell cycle, stress response, ribosome biogenesis and in those bacteria that undergo differentiation, in morphogenesis control. The sequence is that of GTPase Obg from Bacteroides thetaiotaomicron (strain ATCC 29148 / DSM 2079 / JCM 5827 / CCUG 10774 / NCTC 10582 / VPI-5482 / E50).